Consider the following 878-residue polypeptide: Aminopeptidase M1-C (878 aa).

Residues 102 to 209 (LGEGVLAMDF…MSTYLVAIVV (108 aa)) form a required for membrane association region. Substrate-binding positions include glutamate 142 and 275–279 (GAMEN). A Zn(2+)-binding site is contributed by histidine 311. Catalysis depends on glutamate 312, which acts as the Proton acceptor. Zn(2+)-binding residues include histidine 315 and glutamate 334. Positions 726 to 727 (LL) match the Dileucine internalization motif motif.

It belongs to the peptidase M1 family. As to quaternary structure, homodimer. Zn(2+) serves as cofactor.

The protein resides in the membrane. Its subcellular location is the microsome membrane. It localises to the cytoplasm. The catalysed reaction is Release of an N-terminal amino acid, Xaa-|-Yaa- from a peptide, amide or arylamide. Xaa is preferably Ala, but may be most amino acids including Pro (slow action). When a terminal hydrophobic residue is followed by a prolyl residue, the two may be released as an intact Xaa-Pro dipeptide.. This is Aminopeptidase M1-C from Oryza sativa subsp. japonica (Rice).